The chain runs to 179 residues: Vi polysaccharide biosynthesis protein TviA (179 aa).

It functions in the pathway glycan metabolism; Vi-antigen biosynthesis. It participates in capsule biogenesis; capsule polysaccharide biosynthesis. The polypeptide is Vi polysaccharide biosynthesis protein TviA (tviA) (Salmonella typhi).